The chain runs to 330 residues: tRNA U34 carboxymethyltransferase (330 aa).

Residues lysine 91, tryptophan 105, lysine 110, glycine 130, 152-154 (DPS), 181-182 (IE), methionine 196, tyrosine 200, and arginine 315 contribute to the carboxy-S-adenosyl-L-methionine site.

This sequence belongs to the class I-like SAM-binding methyltransferase superfamily. CmoB family. In terms of assembly, homotetramer.

It carries out the reaction carboxy-S-adenosyl-L-methionine + 5-hydroxyuridine(34) in tRNA = 5-carboxymethoxyuridine(34) in tRNA + S-adenosyl-L-homocysteine + H(+). In terms of biological role, catalyzes carboxymethyl transfer from carboxy-S-adenosyl-L-methionine (Cx-SAM) to 5-hydroxyuridine (ho5U) to form 5-carboxymethoxyuridine (cmo5U) at position 34 in tRNAs. The polypeptide is tRNA U34 carboxymethyltransferase (Shewanella sp. (strain ANA-3)).